We begin with the raw amino-acid sequence, 312 residues long: Pseudouridine-5'-phosphate glycosidase (312 aa).

E31 functions as the Proton donor in the catalytic mechanism. Substrate is bound by residues K93 and V113. D145 contributes to the Mn(2+) binding site. 147 to 149 (SAD) is a binding site for substrate. K166 acts as the Nucleophile in catalysis.

It belongs to the pseudouridine-5'-phosphate glycosidase family. Homotrimer. The cofactor is Mn(2+). Requires Fe(2+) as cofactor. It depends on Co(2+) as a cofactor.

The catalysed reaction is D-ribose 5-phosphate + uracil = psi-UMP + H2O. With respect to regulation, inhibited by Zn(2+) and Ni(2+). Its function is as follows. Catalyzes the reversible cleavage of pseudouridine 5'-phosphate (PsiMP) to ribose 5-phosphate and uracil. Functions biologically in the cleavage direction, as part of a pseudouridine degradation pathway. This chain is Pseudouridine-5'-phosphate glycosidase, found in Escherichia coli (strain K12).